The primary structure comprises 1049 residues: Exotoxin PaxA (1049 aa).

A run of 4 helical transmembrane segments spans residues 246–266 (GLGL…FTLA), 311–331 (GPAA…LSFL), 375–395 (ITTI…ASAG), and 397–417 (LVGA…SGIL). 6 Hemolysin-type calcium-binding repeats span residues 744–761 (KGSK…DDLL), 762–779 (NGND…NDEL), 780–797 (RGDN…NDKL), 798–815 (FGGN…DDEL), 826–843 (RGGK…SDFL), and 844–861 (DGGE…NDFY).

It belongs to the RTX prokaryotic toxin (TC 1.C.11) family.

It localises to the secreted. Its subcellular location is the host cell membrane. Its function is as follows. PaxA is associated with abortion cases in swine and septicemia in young piglets. Shows cohemolytic activity with the sphingomyelinase of S.aureus but is devoid of direct hemolytic activity. This chain is Exotoxin PaxA (paxA), found in Pasteurella aerogenes.